The primary structure comprises 440 residues: Lipopolysaccharide-processing protein LpsZ (440 aa).

It to E.coli capsule polysaccharide export protein KpsC.

It is found in the cytoplasm. Its function is as follows. Involved in the invasion of nitrogen fixation nodules. May be involved in the biosynthesis of lipopolysaccharides as an enzyme or a regulatory protein. The protein is Lipopolysaccharide-processing protein LpsZ (lpsZ) of Rhizobium meliloti (Ensifer meliloti).